Here is a 297-residue protein sequence, read N- to C-terminus: HTH-type transcriptional regulator ArgP (297 aa).

Positions 4-60 (PDYRTLQALDAVIRERGFERAAQKLCITQSAVSQRIKQLENMFGQPLLVRTVPPRPT) constitute an HTH lysR-type domain. The H-T-H motif DNA-binding region spans 21 to 40 (FERAAQKLCITQSAVSQRIK).

This sequence belongs to the LysR transcriptional regulatory family. As to quaternary structure, homodimer.

Controls the transcription of genes involved in arginine and lysine metabolism. This chain is HTH-type transcriptional regulator ArgP, found in Citrobacter koseri (strain ATCC BAA-895 / CDC 4225-83 / SGSC4696).